The chain runs to 577 residues: Probable HECT-type ubiquitin ligase-interacting protein creD (577 aa).

Disordered regions lie at residues 376–398 and 428–566; these read LDPA…GTLS and NLHA…EEER. Composition is skewed to polar residues over residues 428-447 and 460-472; these read NLHA…NQLE and SSGS…TSPE. A compositionally biased stretch (basic and acidic residues) spans 473–486; sequence LSRRPSDEVDHDHV. Residues 528 to 544 are compositionally biased toward polar residues; that stretch reads SPQQAHVRSANRSSSYF.

The protein belongs to the arrestin family. As to quaternary structure, interacts with hulA.

Functionally, component of the regulatory network controlling carbon source utilization through ubiquitination and deubiquitination involving creA, creB, creC, creD and acrB. May be involved in signaling by recognizing appropriately phosphorylated substrates via its arrestin domains and then recruit a HECT-type ubiquitin ligase such as hulA, leading to ubiquitination of the substrate, providing a link between ubiquitination and phosphorylation in protein regulation and stability. The chain is Probable HECT-type ubiquitin ligase-interacting protein creD (creD) from Aspergillus terreus (strain NIH 2624 / FGSC A1156).